A 956-amino-acid chain; its full sequence is MEKPELWGVLALLLLCSYTCGSQDLQVIDLLTVGESRQMVAVAEKIRTALLTAGDIYLLSTFRLPPKQGGVLFGLYSRQDNTRWLEASVVGKINKVLVRYQREDGKVHAVNLQQAGLADGRTHTALLRLRGPSRPSPGLQLYVDCKLGDQHAGLPALAPIPPAEVSGLEIRTGQKAYLRMQGFVESMKIILGGSMARVGALSECPFQGDDSIHNAVTSALQSILGEQTKALVTQLTLFNQILVELRDDIRDQVKEMSLIRNTIMECQVCGFHEQRSHCSPSPCFRGVDCMEVYEYPGYRCGPCPPGLQGNGTHCDDINECAHADPCFPGSSCINTMPGFHCEACPPGYKGTRVSGVGIDYARASKQVCNDIDECNDGNNGGCDPNSICTNTVGSFKCGPCRLGFLGNQSQGCVPARTCHSPAHSPCHIHAHCLFERNGAVSCQCNVGWAGNGNVCGPDTDIDGYPDQALPCMDNNKHCKQDNCLLTPNSGQEDADNDGVGDQCDDDADGDGIKNVEDNCRLFPNKDQQNSDTDSFGDACDNCPNVPNNDQKDTDGNGEGDACDNDVDGDGIPNGLDNCPKVPNPLQTDRDEDGVGDACDSCPEMSNPTQTDADSDLVGDVCDTNEDSDGDGHQDTKDNCPQLPNSSQLDSDNDGLGDECDGDDDNDGVPDYIPPGPDNCRLVPNPNQKDSDGNGVGDVCEDDFDNDAVVDPLDVCPESAEVTLTDFRAYQTVILDPEGDAQIDPNWVVLNQGMEIVQTMNSDPGLAVGYTAFNGVDFEGTFHVNTVTDDDYAGFLFSYQDSGRFYVVMWKQTEQTYWQATPFRAVAQPGLQLKAVTSISGPGEHLRNALWHTGHTPDQVRLLWTDPRNVGWRDKTSYRWRLLHRPQVGYIRVKLYEGPQLVADSGVIIDTSMRGGRLGVFCFSQENIIWSNLQYRCNDTVPEDFEPFRRQLLQGRV.

The first 21 residues, 1–21, serve as a signal peptide directing secretion; that stretch reads MEKPELWGVLALLLLCSYTCG. Residues 22-193 form the Laminin G-like domain; the sequence is SQDLQVIDLL…VESMKIILGG (172 aa). 21 disulfide bridges follow: Cys278/Cys289, Cys283/Cys300, Cys303/Cys314, Cys320/Cys332, Cys326/Cys341, Cys344/Cys368, Cys374/Cys388, Cys382/Cys397, Cys400/Cys412, Cys418/Cys432, Cys426/Cys442, Cys444/Cys455, Cys471/Cys478, Cys483/Cys503, Cys519/Cys539, Cys542/Cys562, Cys578/Cys598, Cys601/Cys621, Cys639/Cys659, Cys679/Cys699, and Cys715/Cys936. Asn310 carries an N-linked (GlcNAc...) asparagine glycan. One can recognise an EGF-like 1; calcium-binding domain in the interval 316-354; the sequence is DINECAHADPCFPGSSCINTMPGFHCEACPPGYKGTRVS. In terms of domain architecture, EGF-like 2; calcium-binding spans 370 to 410; that stretch reads DIDECNDGNNGGCDPNSICTNTVGSFKCGPCRLGFLGNQSQ. An N-linked (GlcNAc...) asparagine glycan is attached at Asn407. In terms of domain architecture, EGF-like 3 spans 414–456; that stretch reads PARTCHSPAHSPCHIHAHCLFERNGAVSCQCNVGWAGNGNVCG. TSP type-3 repeat units follow at residues 457-491, 492-527, 528-550, 551-586, 587-609, 610-647, 648-687, and 688-723; these read PDTD…NSGQ, EDAD…NKDQ, QNSD…NNDQ, KDTD…NPLQ, TDRD…NPTQ, TDAD…NSSQ, LDSD…NPNQ, and KDSD…EVTL. 2 disordered regions span residues 518–537 and 546–699; these read NCRL…SFGD and PNND…GDVC. Residues 555 to 568 show a composition bias toward acidic residues; sequence GNGEGDACDNDVDG. Over residues 612–628 the composition is skewed to acidic residues; sequence ADSDLVGDVCDTNEDSD. Asn644 is a glycosylation site (N-linked (GlcNAc...) asparagine). Positions 650 to 667 are enriched in acidic residues; it reads SDNDGLGDECDGDDDNDG. Positions 727 to 941 constitute a TSP C-terminal domain; the sequence is RAYQTVILDP…LQYRCNDTVP (215 aa). A glycan (N-linked (GlcNAc...) asparagine) is linked at Asn937.

The protein belongs to the thrombospondin family. As to quaternary structure, oligomer; disulfide-linked. Brain, lung and cartilage.

Its function is as follows. Adhesive glycoprotein that mediates cell-to-cell and cell-to-matrix interactions. Can bind to fibrinogen, fibronectin, laminin and type V collagen. The chain is Thrombospondin-3 (Thbs3) from Mus musculus (Mouse).